The chain runs to 555 residues: Formate--tetrahydrofolate ligase (555 aa).

Threonine 65 to serine 72 is an ATP binding site.

This sequence belongs to the formate--tetrahydrofolate ligase family.

The catalysed reaction is (6S)-5,6,7,8-tetrahydrofolate + formate + ATP = (6R)-10-formyltetrahydrofolate + ADP + phosphate. It participates in one-carbon metabolism; tetrahydrofolate interconversion. This is Formate--tetrahydrofolate ligase from Staphylococcus carnosus (strain TM300).